The primary structure comprises 259 residues: Thiazole synthase (259 aa).

The active-site Schiff-base intermediate with DXP is the K99. 1-deoxy-D-xylulose 5-phosphate is bound by residues G161, 187 to 188 (AG), and 209 to 210 (NT).

It belongs to the ThiG family. In terms of assembly, homotetramer. Forms heterodimers with either ThiH or ThiS.

The protein localises to the cytoplasm. The enzyme catalyses [ThiS sulfur-carrier protein]-C-terminal-Gly-aminoethanethioate + 2-iminoacetate + 1-deoxy-D-xylulose 5-phosphate = [ThiS sulfur-carrier protein]-C-terminal Gly-Gly + 2-[(2R,5Z)-2-carboxy-4-methylthiazol-5(2H)-ylidene]ethyl phosphate + 2 H2O + H(+). Its pathway is cofactor biosynthesis; thiamine diphosphate biosynthesis. Catalyzes the rearrangement of 1-deoxy-D-xylulose 5-phosphate (DXP) to produce the thiazole phosphate moiety of thiamine. Sulfur is provided by the thiocarboxylate moiety of the carrier protein ThiS. In vitro, sulfur can be provided by H(2)S. The polypeptide is Thiazole synthase (Sulfurimonas denitrificans (strain ATCC 33889 / DSM 1251) (Thiomicrospira denitrificans (strain ATCC 33889 / DSM 1251))).